The chain runs to 125 residues: Glycine cleavage system H protein (125 aa).

Positions 22–103 constitute a Lipoyl-binding domain; the sequence is VFVVGITENA…AFTAWIFKIK (82 aa). Lys-63 is modified (N6-lipoyllysine).

Belongs to the GcvH family. The glycine cleavage system is composed of four proteins: P, T, L and H. It depends on (R)-lipoate as a cofactor.

Its function is as follows. The glycine cleavage system catalyzes the degradation of glycine. The H protein shuttles the methylamine group of glycine from the P protein to the T protein. This is Glycine cleavage system H protein from Bordetella avium (strain 197N).